The sequence spans 125 residues: Small ribosomal subunit protein uS12c (125 aa).

Residues methionine 1–alanine 23 form a disordered region. The span at arginine 9 to lysine 20 shows a compositional bias: basic residues.

It belongs to the universal ribosomal protein uS12 family. In terms of assembly, part of the 30S ribosomal subunit.

The protein localises to the plastid. Its subcellular location is the chloroplast. In terms of biological role, with S4 and S5 plays an important role in translational accuracy. Located at the interface of the 30S and 50S subunits. The protein is Small ribosomal subunit protein uS12c (rps12) of Euglena gracilis.